We begin with the raw amino-acid sequence, 247 residues long: Uridylate kinase (247 aa).

An ATP-binding site is contributed by 18–21 (KLSG). Gly60 serves as a coordination point for UMP. Positions 61 and 65 each coordinate ATP. UMP-binding positions include Asp80 and 141–148 (TGNPFFTT). ATP contacts are provided by Thr168, Tyr174, and Asp177.

The protein belongs to the UMP kinase family. As to quaternary structure, homohexamer.

It localises to the cytoplasm. The enzyme catalyses UMP + ATP = UDP + ADP. It functions in the pathway pyrimidine metabolism; CTP biosynthesis via de novo pathway; UDP from UMP (UMPK route): step 1/1. Its activity is regulated as follows. Inhibited by UTP. In terms of biological role, catalyzes the reversible phosphorylation of UMP to UDP. This Pseudomonas savastanoi pv. phaseolicola (strain 1448A / Race 6) (Pseudomonas syringae pv. phaseolicola (strain 1448A / Race 6)) protein is Uridylate kinase.